A 103-amino-acid chain; its full sequence is Large ribosomal subunit protein bL21 (103 aa).

The protein belongs to the bacterial ribosomal protein bL21 family. Part of the 50S ribosomal subunit. Contacts protein L20.

This protein binds to 23S rRNA in the presence of protein L20. The chain is Large ribosomal subunit protein bL21 from Alcanivorax borkumensis (strain ATCC 700651 / DSM 11573 / NCIMB 13689 / SK2).